Consider the following 337-residue polypeptide: Phenylalanine--tRNA ligase alpha subunit (337 aa).

E252 serves as a coordination point for Mg(2+).

This sequence belongs to the class-II aminoacyl-tRNA synthetase family. Phe-tRNA synthetase alpha subunit type 1 subfamily. Tetramer of two alpha and two beta subunits. Mg(2+) is required as a cofactor.

It localises to the cytoplasm. The enzyme catalyses tRNA(Phe) + L-phenylalanine + ATP = L-phenylalanyl-tRNA(Phe) + AMP + diphosphate + H(+). The polypeptide is Phenylalanine--tRNA ligase alpha subunit (Saccharophagus degradans (strain 2-40 / ATCC 43961 / DSM 17024)).